The chain runs to 239 residues: MARNSEKAQSMLFRFREAQAADLGIIDAGRTRRPRSITEQDSIPACEKWRGQVLKEISRKVSRIQDPALSDYQIRDLNDEINKLMREKHMWEVQIRNLGGPNYMRSGGKVYDEAGREIPGGGRGYKYFGRARELPGVKELFEAAARAKQDDEKPLETRDDLRKQVDAAYYGYAPDEEDEKLLAYEAARERQAFENLAKAAAGLEPPPGWEPLPEWELPTMDEVAQELIDRRRRRLLDQL.

Belongs to the ISY1 family. Associated with the spliceosome.

The protein resides in the cytoplasm. It localises to the nucleus. Involved in pre-mRNA splicing. The chain is Pre-mRNA-splicing factor isy1 (msp-7) from Neurospora crassa (strain ATCC 24698 / 74-OR23-1A / CBS 708.71 / DSM 1257 / FGSC 987).